The primary structure comprises 150 residues: Centrin-B (150 aa).

EF-hand domains follow at residues 12-46 (DQISEIKESFDMFKSDNGKLDNDQIKYAFKALGCE), 80-114 (DSMSTLEQAFKLFVKDGSGITFKDLKKVAINIGEE), and 115-150 (CSDSDLYDMIEFADTDGDGVINKSEFISLMTTKKVL). Positions 128, 130, 132, and 139 each coordinate Ca(2+).

Belongs to the centrin family.

It localises to the cytoplasm. The protein resides in the cytoskeleton. Its subcellular location is the microtubule organizing center. It is found in the centrosome. Functionally, plays a fundamental role in microtubule-organizing center structure and function. In Dictyostelium discoideum (Social amoeba), this protein is Centrin-B (cenB).